A 512-amino-acid polypeptide reads, in one-letter code: Probable cobyric acid synthase (512 aa).

The 186-residue stretch at 275-460 folds into the GATase cobBQ-type domain; sequence SVTVAVPHLP…LHGLFGNDAA (186 aa). The active-site Nucleophile is the Cys-353. His-452 is a catalytic residue.

It belongs to the CobB/CobQ family. CobQ subfamily.

The protein operates within cofactor biosynthesis; adenosylcobalamin biosynthesis. Catalyzes amidations at positions B, D, E, and G on adenosylcobyrinic A,C-diamide. NH(2) groups are provided by glutamine, and one molecule of ATP is hydrogenolyzed for each amidation. This Halobacterium salinarum (strain ATCC 29341 / DSM 671 / R1) protein is Probable cobyric acid synthase.